The chain runs to 273 residues: Putative pyruvate, phosphate dikinase regulatory protein (273 aa).

Residue 153–160 (GVSRTSKT) participates in ADP binding.

It belongs to the pyruvate, phosphate/water dikinase regulatory protein family. PDRP subfamily.

It carries out the reaction N(tele)-phospho-L-histidyl/L-threonyl-[pyruvate, phosphate dikinase] + ADP = N(tele)-phospho-L-histidyl/O-phospho-L-threonyl-[pyruvate, phosphate dikinase] + AMP + H(+). The catalysed reaction is N(tele)-phospho-L-histidyl/O-phospho-L-threonyl-[pyruvate, phosphate dikinase] + phosphate + H(+) = N(tele)-phospho-L-histidyl/L-threonyl-[pyruvate, phosphate dikinase] + diphosphate. Bifunctional serine/threonine kinase and phosphorylase involved in the regulation of the pyruvate, phosphate dikinase (PPDK) by catalyzing its phosphorylation/dephosphorylation. In Rhizobium meliloti (strain 1021) (Ensifer meliloti), this protein is Putative pyruvate, phosphate dikinase regulatory protein.